Consider the following 520-residue polypeptide: BBSome complex member BBS4 (520 aa).

Residues 1-26 form a disordered region; sequence MAEVKLGMKTQVPASVESQKPRSKKA. Positions 1 to 66 are required for localization to centrosomes; the sequence is MAEVKLGMKT…EQLQETQGLC (66 aa). TPR repeat units follow at residues 67–100, 102–134, 135–167, 168–201, 203–235, 237–269, 270–303, 304–337, 339–371, and 373–408; these read EYAI…SPQC, DNLK…NQKD, WEIC…LNKH, DLTY…SPEN, ELLT…DPAN, KAIL…IPES, PPLW…APFD, WKIL…QPKM, ELYM…DKCN, and LVNL…LKDN. Residues 101-337 form an interaction with PCM1 region; it reads ADNLKQVARS…SAAINFQPKM (237 aa). Positions 338–520 are required for localization to centrosomes; sequence GELYMLLAVA…TEASEQKKEK (183 aa). Residues 488 to 520 are disordered; sequence AQLPKPPSLPLEPEPEPTVEASPTEASEQKKEK.

This sequence belongs to the BBS4 family. Part of BBSome complex, that contains BBS1, BBS2, BBS4, BBS5, BBS7, BBS8/TTC8, BBS9 and BBIP10. Interacts with PCM1 and DCTN1. Interacts with DC28B. Interacts with ALDOB and C2CD3. Interacts with PKD1. Interacts with CEP290. Interacts with DLEC1. In terms of tissue distribution, expressed in the hippocampus and dentate gyrus, the columnar epithelial cells of bronchioles, the olfactory epithelium and the inner segment and outer nuclear layer of the retina. Expressed in testis.

It is found in the cytoplasm. The protein resides in the cytoskeleton. The protein localises to the microtubule organizing center. Its subcellular location is the centrosome. It localises to the cell projection. It is found in the cilium membrane. The protein resides in the centriolar satellite. The protein localises to the cilium. Its subcellular location is the flagellum. Functionally, the BBSome complex is thought to function as a coat complex required for sorting of specific membrane proteins to the primary cilia. The BBSome complex is required for ciliogenesis but is dispensable for centriolar satellite function. This ciliogenic function is mediated in part by the Rab8 GDP/GTP exchange factor, which localizes to the basal body and contacts the BBSome. Rab8(GTP) enters the primary cilium and promotes extension of the ciliary membrane. Firstly the BBSome associates with the ciliary membrane and binds to RAB3IP/Rabin8, the guanosyl exchange factor (GEF) for Rab8 and then the Rab8-GTP localizes to the cilium and promotes docking and fusion of carrier vesicles to the base of the ciliary membrane. The BBSome complex, together with the LTZL1, controls SMO ciliary trafficking and contributes to the sonic hedgehog (SHH) pathway regulation. Required for proper BBSome complex assembly and its ciliary localization. Required for microtubule anchoring at the centrosome but not for microtubule nucleation. May be required for the dynein-mediated transport of pericentriolar proteins to the centrosome. This chain is BBSome complex member BBS4 (Bbs4), found in Mus musculus (Mouse).